The primary structure comprises 362 residues: GTPase Obg (362 aa).

The region spanning 1–159 (MKFIDEARIE…RKLKLELKVL (159 aa)) is the Obg domain. The interval 129-148 (HFKSSTNRAPRQKTNGKEGE) is disordered. A compositionally biased stretch (polar residues) spans 130–141 (FKSSTNRAPRQK). One can recognise an OBG-type G domain in the interval 160–334 (ADVGLLGMPN…LCYALQDYLD (175 aa)). GTP-binding positions include 166-173 (GMPNAGKS), 191-195 (FTTLH), 213-216 (DIPG), 284-287 (NKVD), and 315-317 (SAL). Ser-173 and Thr-193 together coordinate Mg(2+). The disordered stretch occupies residues 340 to 362 (RDDAEERAADPRYQDQAADKSPD).

The protein belongs to the TRAFAC class OBG-HflX-like GTPase superfamily. OBG GTPase family. In terms of assembly, monomer. It depends on Mg(2+) as a cofactor.

The protein localises to the cytoplasm. Its function is as follows. An essential GTPase which binds GTP, GDP and possibly (p)ppGpp with moderate affinity, with high nucleotide exchange rates and a fairly low GTP hydrolysis rate. Plays a role in control of the cell cycle, stress response, ribosome biogenesis and in those bacteria that undergo differentiation, in morphogenesis control. The chain is GTPase Obg from Polynucleobacter asymbioticus (strain DSM 18221 / CIP 109841 / QLW-P1DMWA-1) (Polynucleobacter necessarius subsp. asymbioticus).